The sequence spans 3351 residues: Apolipophorins (3351 aa).

The signal sequence occupies residues 1-25 (MARMKYNIALIGILASVLLTIAVNA). A Vitellogenin domain is found at 43–641 (YIPGNYYDYS…SQHGFLPRSS (599 aa)). Asn67, Asn644, Asn1514, Asn1744, Asn1932, Asn1979, and Asn2822 each carry an N-linked (GlcNAc...) asparagine glycan. A VWFD domain is found at 2786–2952 (LRGHVVDGKH…DYGVGKCTAI (167 aa)).

As to quaternary structure, interacts with Nrx-1 (via cytoplasmic domain); the interaction supports apolpp/ApoLI protein stability. In terms of processing, may be modified covalently by lipidation. Post-translationally, cleaved into 2 chains by furin protease. However, prevention of cleavage does not impair its function. In terms of tissue distribution, during stage 12, it is highly present throughout the yolk sac. By late stage 14, it localizes in the lateral fat body cells. Starting at stage 14, it localizes to the apodemes. Component of hemolymph clots (at protein level). Expressed in the amniosera. Expressed in rhabdomere of photoreceptor cells in retina (at protein level). Expressed in rhabdomere of photoreceptor cells in retina (at protein level). As to expression, expressed in simper cells as well as interphotoreceptor matrix (at protein level).

It is found in the secreted. The protein localises to the cell projection. The protein resides in the rhabdomere. In terms of biological role, constitutes the major component of lipophorin, which mediates transport for various types of lipids in hemolymph. Acts by forming lipoprotein particles that bind lipoproteins and lipids. Also involved in the transport of hydrophobic ligands like juvenile hormones, pheromone hydrocarbons and carotenoids. Required for morphogens wingless (wg) and hedgehog (hh) function, probably by acting as vehicles for the movement of wg and hh, explaining how covalently lipidated wg and hh can spread over long distances. May also be involved in transport and/or metabolism of heme. Involved in yolk granule formation. May be a component of yolk incorporated into yolk granules via yl/yolkless-mediated endocytosis and the endolysosomal pathway. In Drosophila melanogaster (Fruit fly), this protein is Apolipophorins.